Reading from the N-terminus, the 372-residue chain is Invasion protein InvE (372 aa).

Residues 1–19 (MIPGSTSGISFSRILSRQT) are compositionally biased toward polar residues. A disordered region spans residues 1–46 (MIPGSTSGISFSRILSRQTSHQDATQHTDAQQAEIQQAAEDSSPGA). Residues 21–40 (HQDATQHTDAQQAEIQQAAE) are compositionally biased toward low complexity.

Its subcellular location is the cell membrane. Its function is as follows. Involved in the triggering of intracellular events that lead to microbial internalization. These events include increase in calcium level, redistribution of actin microfilaments, and changes in the normal structure of the microvilli. Encoded within the type III secretion system (SPI-1 T3SS), it is essential for the translocation of protein effectors into host cells. Forms a complex with SipB and SipC in the presence of their chaperone SicA. Positively regulates the secretion of SPI-1 T3SS effector proteins SipB, SipC and SipD and negatively influences the secretion of SipA, SopA and SptP. This chain is Invasion protein InvE (invE), found in Salmonella typhimurium (strain LT2 / SGSC1412 / ATCC 700720).